A 404-amino-acid chain; its full sequence is MKLPIYLDYSATCPVDPRVAEKMVQYMTMDGTFGNPASRSHRYGWQAEEAVDTAREQIAALLNADPREIVFTSGATESDNLAIKGVAHFYNKQGKHIITSKTEHKAVLDTMRQLEREGFEVTYLDPESNGLIDLAKLEAAMRDDTILVSIMHVNNEIGVVQDIAAIGELCRSRKVVFHVDAAQSAGKVAIDVQEMKVDLISLSAHKAYGPKGIGALYVRRKPRIRLEAQMHGGGHERGFRSGTLPTHQIVGMGEAFRIAKEELQQDYDHALKLRNRLLDGIKDMEAVTINGDLDQRVPHNLNVSFAFVEGESLLMALKDLAVSSGSACTSASLEPSYVLRALGLNDELAHSSIRFSFGRFTTEAEIDYAIELIRVAVDKLRAMSPLWDMYKDGVDLNTVEWAHH.

Pyridoxal 5'-phosphate-binding positions include 75–76 (AT), Asn155, Gln183, and 203–205 (SAH). The residue at position 206 (Lys206) is an N6-(pyridoxal phosphate)lysine. Residue Thr243 coordinates pyridoxal 5'-phosphate. Cys328 functions as the Cysteine persulfide intermediate in the catalytic mechanism. Residue Cys328 coordinates [2Fe-2S] cluster.

This sequence belongs to the class-V pyridoxal-phosphate-dependent aminotransferase family. NifS/IscS subfamily. In terms of assembly, homodimer. Forms a heterotetramer with IscU, interacts with other sulfur acceptors. Pyridoxal 5'-phosphate is required as a cofactor.

It localises to the cytoplasm. It carries out the reaction (sulfur carrier)-H + L-cysteine = (sulfur carrier)-SH + L-alanine. Its pathway is cofactor biosynthesis; iron-sulfur cluster biosynthesis. Its function is as follows. Master enzyme that delivers sulfur to a number of partners involved in Fe-S cluster assembly, tRNA modification or cofactor biosynthesis. Catalyzes the removal of elemental sulfur atoms from cysteine to produce alanine. Functions as a sulfur delivery protein for Fe-S cluster synthesis onto IscU, an Fe-S scaffold assembly protein, as well as other S acceptor proteins. This Vibrio cholerae serotype O1 (strain M66-2) protein is Cysteine desulfurase IscS.